The primary structure comprises 80 residues: Acyl carrier protein (80 aa).

One can recognise a Carrier domain in the interval 4–79 (EAILEKVRSI…DAVKYIEDKQ (76 aa)). At Ser-39 the chain carries O-(pantetheine 4'-phosphoryl)serine.

It belongs to the acyl carrier protein (ACP) family. 4'-phosphopantetheine is transferred from CoA to a specific serine of apo-ACP by AcpS. This modification is essential for activity because fatty acids are bound in thioester linkage to the sulfhydryl of the prosthetic group.

Its subcellular location is the cytoplasm. It functions in the pathway lipid metabolism; fatty acid biosynthesis. Carrier of the growing fatty acid chain in fatty acid biosynthesis. This Prochlorococcus marinus (strain MIT 9313) protein is Acyl carrier protein.